We begin with the raw amino-acid sequence, 229 residues long: uncharacterized protein (229 aa).

This is an uncharacterized protein from Sulfolobus islandicus filamentous virus (isolate Iceland/Hveragerdi) (SIFV).